The following is a 285-amino-acid chain: Sulfotransferase 2A2 (285 aa).

Positions 44, 45, 46, 47, 48, and 49 each coordinate 3'-phosphoadenylyl sulfate. The active-site Proton acceptor is the H99. 8 residues coordinate 3'-phosphoadenylyl sulfate: R121, S129, Y184, S218, M223, R247, K248, and G249.

This sequence belongs to the sulfotransferase 1 family.

It localises to the cytoplasm. The enzyme catalyses an alcohol + 3'-phosphoadenylyl sulfate = an alkyl sulfate + adenosine 3',5'-bisphosphate + H(+). Functionally, sulfotransferase that utilizes 3'-phospho-5'-adenylyl sulfate (PAPS) as sulfonate donor to catalyze the sulfate conjugation of a potential wide variety of acceptor molecules bearing a hydroxyl group. Sulfonation increases the water solubility of most compounds, and therefore their renal excretion, but it can also result in bioactivation to form active metabolites. In Mus musculus (Mouse), this protein is Sulfotransferase 2A2.